The sequence spans 859 residues: Active breakpoint cluster region-related protein (859 aa).

The interval 26–84 (TDEYDGEGNEEQKGPPEGSETMPYIDESPTMSPQLSARSQGGGDGVSPTPPEGLAPGVE) is disordered. Positions 54–64 (PTMSPQLSARS) are enriched in polar residues. Phosphoserine is present on Ser-57. The 194-residue stretch at 91 to 284 (MRKLVLSGFL…QNFLSSINED (194 aa)) folds into the DH domain. The 159-residue stretch at 301–459 (QLVKDGFLVE…WREAIQKLQK (159 aa)) folds into the PH domain. Residues 484–613 (TVHNIPVTSN…ETKNWHTDVI (130 aa)) form the C2 domain. The Rho-GAP domain maps to 647–845 (VKISVVTKRE…YYLQHPPISF (199 aa)).

As to quaternary structure, interacts with DLG4. As to expression, highly enriched in the brain. Much weaker expression in heart, lung and muscle.

Its subcellular location is the cell projection. It localises to the dendritic spine. The protein localises to the axon. The protein resides in the synapse. Protein with a unique structure having two opposing regulatory activities toward small GTP-binding proteins. The C-terminus is a GTPase-activating protein domain which stimulates GTP hydrolysis by RAC1, RAC2 and CDC42. Accelerates the intrinsic rate of GTP hydrolysis of RAC1 or CDC42, leading to down-regulation of the active GTP-bound form. The central Dbl homology (DH) domain functions as a guanine nucleotide exchange factor (GEF) that modulates the GTPases CDC42, RHOA and RAC1. Promotes the conversion of CDC42, RHOA and RAC1 from the GDP-bound to the GTP-bound form. Functions as an important negative regulator of neuronal RAC1 activity. Regulates macrophage functions such as CSF-1 directed motility and phagocytosis through the modulation of RAC1 activity. This is Active breakpoint cluster region-related protein from Homo sapiens (Human).